Consider the following 289-residue polypeptide: Fatty acid elongase 1 (289 aa).

The next 7 helical transmembrane spans lie at 22 to 42 (VVGY…KLFA), 72 to 92 (AMVL…STVT), 123 to 143 (FWIG…IFLV), 152 to 172 (FLHW…YCVG), 177 to 197 (IWVA…FAIA), 208 to 228 (WAPY…FVTL), and 251 to 271 (LLMY…AHVL). Residues 154–158 (HWYHH) carry the HxxHH motif motif. Residue H157 is the Nucleophile of the active site. A glycan (N-linked (GlcNAc...) asparagine) is linked at N282.

The protein belongs to the ELO family.

Its subcellular location is the endoplasmic reticulum membrane. It catalyses the reaction an acyl-CoA + malonyl-CoA + H(+) = a 3-oxoacyl-CoA + CO2 + CoA. It participates in lipid metabolism; fatty acid biosynthesis. Its function is as follows. Involved in the synthesis of fatty acids. Elongates C4 fatty acids. Required for the normal mitochondrial function, energy metabolism and growth of epimastigotes. This Trypanosoma cruzi (strain CL Brener) protein is Fatty acid elongase 1.